Here is a 353-residue protein sequence, read N- to C-terminus: Photosystem II D2 protein (353 aa).

T2 carries the post-translational modification N-acetylthreonine. T2 is modified (phosphothreonine). A helical membrane pass occupies residues 41–61; sequence CAYFALGGWFTGTTFVTSWYT. H118 is a chlorophyll a binding site. A helical membrane pass occupies residues 125–141; sequence GFMLRQFELARSVQLRP. Pheophytin a is bound by residues Q130 and N143. The helical transmembrane segment at 153–166 threads the bilayer; it reads VFVSVFLIYPLGQS. H198 is a binding site for chlorophyll a. A helical membrane pass occupies residues 208–228; the sequence is AALLCAIHGATVENTLFEDGD. The a plastoquinone site is built by H215 and F262. H215 provides a ligand contact to Fe cation. Fe cation is bound at residue H269. Residues 279–295 form a helical membrane-spanning segment; it reads GLWMSAIGVVGLALNLR.

This sequence belongs to the reaction center PufL/M/PsbA/D family. As to quaternary structure, PSII is composed of 1 copy each of membrane proteins PsbA, PsbB, PsbC, PsbD, PsbE, PsbF, PsbH, PsbI, PsbJ, PsbK, PsbL, PsbM, PsbT, PsbX, PsbY, PsbZ, Psb30/Ycf12, at least 3 peripheral proteins of the oxygen-evolving complex and a large number of cofactors. It forms dimeric complexes. It depends on The D1/D2 heterodimer binds P680, chlorophylls that are the primary electron donor of PSII, and subsequent electron acceptors. It shares a non-heme iron and each subunit binds pheophytin, quinone, additional chlorophylls, carotenoids and lipids. There is also a Cl(-1) ion associated with D1 and D2, which is required for oxygen evolution. The PSII complex binds additional chlorophylls, carotenoids and specific lipids. as a cofactor.

The protein resides in the plastid. Its subcellular location is the chloroplast thylakoid membrane. It catalyses the reaction 2 a plastoquinone + 4 hnu + 2 H2O = 2 a plastoquinol + O2. In terms of biological role, photosystem II (PSII) is a light-driven water:plastoquinone oxidoreductase that uses light energy to abstract electrons from H(2)O, generating O(2) and a proton gradient subsequently used for ATP formation. It consists of a core antenna complex that captures photons, and an electron transfer chain that converts photonic excitation into a charge separation. The D1/D2 (PsbA/PsbD) reaction center heterodimer binds P680, the primary electron donor of PSII as well as several subsequent electron acceptors. D2 is needed for assembly of a stable PSII complex. This chain is Photosystem II D2 protein, found in Liriodendron tulipifera (Tuliptree).